Reading from the N-terminus, the 226-residue chain is Elongation factor 1-delta (226 aa).

Residues 82–131 (SSVATPPVADTKASAAEDDDDDDVDLFGEETEEEKKASEERAAAVKASGK) are disordered. The span at 97-113 (AEDDDDDDVDLFGEETE) shows a compositional bias: acidic residues. The span at 114–124 (EEKKASEERAA) shows a compositional bias: basic and acidic residues.

It belongs to the EF-1-beta/EF-1-delta family. EF-1 is composed of 4 subunits: alpha, beta (1B-alpha=beta'), delta (1B-beta), and gamma (1B-gamma).

EF-1-beta and EF-1-beta' stimulate the exchange of GDP bound to EF-1-alpha to GTP. This chain is Elongation factor 1-delta, found in Spuriopimpinella brachycarpa (Chamnamul).